Reading from the N-terminus, the 152-residue chain is uncharacterized protein (152 aa).

A signal peptide spans 1–23 (MYSILIACLVLLLCLVIYVGHRA).

This sequence belongs to the asfivirus EP152R family.

Its subcellular location is the virion. This is an uncharacterized protein from Ornithodoros (relapsing fever ticks).